We begin with the raw amino-acid sequence, 418 residues long: Glutamyl-tRNA reductase (418 aa).

Residues 49 to 52 (TCNR), Ser-106, 111 to 113 (EPQ), and Gln-117 contribute to the substrate site. The active-site Nucleophile is the Cys-50. Residue 186 to 191 (GAGEMI) participates in NADP(+) binding.

This sequence belongs to the glutamyl-tRNA reductase family. As to quaternary structure, homodimer.

The catalysed reaction is (S)-4-amino-5-oxopentanoate + tRNA(Glu) + NADP(+) = L-glutamyl-tRNA(Glu) + NADPH + H(+). It participates in porphyrin-containing compound metabolism; protoporphyrin-IX biosynthesis; 5-aminolevulinate from L-glutamyl-tRNA(Glu): step 1/2. Catalyzes the NADPH-dependent reduction of glutamyl-tRNA(Glu) to glutamate 1-semialdehyde (GSA). In Alcanivorax borkumensis (strain ATCC 700651 / DSM 11573 / NCIMB 13689 / SK2), this protein is Glutamyl-tRNA reductase.